Reading from the N-terminus, the 1202-residue chain is Protein HASTY 1 (1202 aa).

M1 bears the N-acetylmethionine mark.

Belongs to the exportin family. As to quaternary structure, interacts with RAN1. Expressed in roots, leaves and floral buds.

Its subcellular location is the nucleus. In terms of biological role, nucleocytoplasmic transporter involved in the nuclear export of microRNAs (miRNAs). Required for several miRNAs accumulation. Specifically required for miR156 accumulation which targets SPL3, SPL4 and SPL5 transcription factors. Involved in plant development through its role in miRNAs processing. Required for vegetative phase change and vegetative to reproductive phase transition. Functionally dependent on RAN1 binding. Does not seem to be involved in small interfering RNAs (siRNAs) processing. The polypeptide is Protein HASTY 1 (HST1) (Arabidopsis thaliana (Mouse-ear cress)).